Consider the following 195-residue polypeptide: CASP-like protein 2C2 (195 aa).

The Cytoplasmic segment spans residues 1-18 (MAATTAAAAVPGVVRAER). A helical membrane pass occupies residues 19–39 (LLRGGCVVMAATAALLLGFSA). Topologically, residues 40–57 (ETKTVLFVRKTAVAKDVQ) are extracellular. The chain crosses the membrane as a helical span at residues 58 to 78 (ALWVLTVAAAAAAGYQFAQLV). At 79 to 106 (RCMYCSSSGDAGAMAVAWTSFLLDKGCA) the chain is on the cytoplasmic side. The chain crosses the membrane as a helical span at residues 107–127 (YVVFASTAAALQACMVGLIGV). Residues 128–145 (EALQWSKLCNIYTRFCEQ) are Extracellular-facing. A helical transmembrane segment spans residues 146-166 (AAAGMLCSFLAAAGMAVLSAF). Residues 167–195 (SARRLFRLYSPAGHRRSCPRAAVLATSPH) lie on the Cytoplasmic side of the membrane.

It belongs to the Casparian strip membrane proteins (CASP) family. In terms of assembly, homodimer and heterodimers.

The protein localises to the cell membrane. This is CASP-like protein 2C2 from Oryza sativa subsp. japonica (Rice).